Reading from the N-terminus, the 747-residue chain is NAD(P)H-quinone oxidoreductase subunit 5, chloroplastic (747 aa).

16 helical membrane passes run 8–28 (AWII…ELLL), 39–59 (IWAF…TKLA), 89–109 (IDPL…MVLI), 125–145 (FAYM…PNLI), 147–167 (IHIF…FWFT), 185–205 (GDFG…SFEF), 231–251 (AFLL…HVWL), 259–279 (TPIS…FLVA), 281–301 (LLPL…IGVI), 328–348 (LGYM…FHLI), 355–375 (ALLF…VGYS), 397–417 (TTFF…CFWS), 426–446 (WLYS…TAFY), 550–570 (LFPL…GIHF), 608–628 (FYSV…YGSV), and 726–746 (LFLY…YNFL).

The protein belongs to the complex I subunit 5 family. In terms of assembly, NDH is composed of at least 16 different subunits, 5 of which are encoded in the nucleus.

The protein localises to the plastid. It is found in the chloroplast thylakoid membrane. It carries out the reaction a plastoquinone + NADH + (n+1) H(+)(in) = a plastoquinol + NAD(+) + n H(+)(out). The enzyme catalyses a plastoquinone + NADPH + (n+1) H(+)(in) = a plastoquinol + NADP(+) + n H(+)(out). NDH shuttles electrons from NAD(P)H:plastoquinone, via FMN and iron-sulfur (Fe-S) centers, to quinones in the photosynthetic chain and possibly in a chloroplast respiratory chain. The immediate electron acceptor for the enzyme in this species is believed to be plastoquinone. Couples the redox reaction to proton translocation, and thus conserves the redox energy in a proton gradient. In Nymphaea alba (White water-lily), this protein is NAD(P)H-quinone oxidoreductase subunit 5, chloroplastic (ndhF).